The following is a 505-amino-acid chain: Betaine aldehyde dehydrogenase (505 aa).

239 to 244 (GSTATG) provides a ligand contact to NAD(+). Catalysis depends on Glu-261, which acts as the Proton acceptor. Cys-296 serves as the catalytic Nucleophile. A Microbody targeting signal motif is present at residues 503–505 (SKL).

This sequence belongs to the aldehyde dehydrogenase family. In terms of assembly, homodimer.

Its subcellular location is the peroxisome. The catalysed reaction is betaine aldehyde + NAD(+) + H2O = glycine betaine + NADH + 2 H(+). The protein operates within amine and polyamine biosynthesis; betaine biosynthesis via choline pathway; betaine from betaine aldehyde: step 1/1. In Hordeum vulgare (Barley), this protein is Betaine aldehyde dehydrogenase.